A 116-amino-acid polypeptide reads, in one-letter code: Large ribosomal subunit protein bL17 (116 aa).

It belongs to the bacterial ribosomal protein bL17 family. As to quaternary structure, part of the 50S ribosomal subunit. Contacts protein L32.

The chain is Large ribosomal subunit protein bL17 from Prochlorococcus marinus (strain MIT 9312).